The sequence spans 144 residues: AP-4 complex subunit sigma-1 (144 aa).

It belongs to the adaptor complexes small subunit family. In terms of assembly, adaptor protein complex 4 (AP-4) is a heterotetramer composed of two large adaptins (epsilon-type subunit AP4E1 and beta-type subunit AP4B1), a medium adaptin (mu-type subunit AP4M1) and a small adaptin (sigma-type AP4S1). As to expression, widely expressed.

Its subcellular location is the golgi apparatus. It is found in the trans-Golgi network membrane. In terms of biological role, component of the adaptor protein complex 4 (AP-4). Adaptor protein complexes are vesicle coat components involved both in vesicle formation and cargo selection. They control the vesicular transport of proteins in different trafficking pathways. AP-4 forms a non clathrin-associated coat on vesicles departing the trans-Golgi network (TGN) and may be involved in the targeting of proteins from the trans-Golgi network (TGN) to the endosomal-lysosomal system. It is also involved in protein sorting to the basolateral membrane in epithelial cells and the proper asymmetric localization of somatodendritic proteins in neurons. AP-4 is involved in the recognition and binding of tyrosine-based sorting signals found in the cytoplasmic part of cargos, but may also recognize other types of sorting signal. In Homo sapiens (Human), this protein is AP-4 complex subunit sigma-1.